The primary structure comprises 154 residues: Ribosome maturation factor RimP (154 aa).

This sequence belongs to the RimP family.

Its subcellular location is the cytoplasm. Functionally, required for maturation of 30S ribosomal subunits. The protein is Ribosome maturation factor RimP of Carboxydothermus hydrogenoformans (strain ATCC BAA-161 / DSM 6008 / Z-2901).